Reading from the N-terminus, the 437-residue chain is Trigger factor (437 aa).

In terms of domain architecture, PPIase FKBP-type spans 163 to 248 (GDIAVINFEG…LNQIKAKVLP (86 aa)).

Belongs to the FKBP-type PPIase family. Tig subfamily.

It is found in the cytoplasm. It catalyses the reaction [protein]-peptidylproline (omega=180) = [protein]-peptidylproline (omega=0). Involved in protein export. Acts as a chaperone by maintaining the newly synthesized protein in an open conformation. Functions as a peptidyl-prolyl cis-trans isomerase. The chain is Trigger factor from Bdellovibrio bacteriovorus (strain ATCC 15356 / DSM 50701 / NCIMB 9529 / HD100).